A 234-amino-acid polypeptide reads, in one-letter code: Phosphoribosylformylglycinamidine synthase subunit PurQ (234 aa).

One can recognise a Glutamine amidotransferase type-1 domain in the interval Arg-4–Ala-234. Catalysis depends on Cys-87, which acts as the Nucleophile. Catalysis depends on residues His-204 and Glu-206.

As to quaternary structure, part of the FGAM synthase complex composed of 1 PurL, 1 PurQ and 2 PurS subunits.

The protein localises to the cytoplasm. It catalyses the reaction N(2)-formyl-N(1)-(5-phospho-beta-D-ribosyl)glycinamide + L-glutamine + ATP + H2O = 2-formamido-N(1)-(5-O-phospho-beta-D-ribosyl)acetamidine + L-glutamate + ADP + phosphate + H(+). It carries out the reaction L-glutamine + H2O = L-glutamate + NH4(+). It functions in the pathway purine metabolism; IMP biosynthesis via de novo pathway; 5-amino-1-(5-phospho-D-ribosyl)imidazole from N(2)-formyl-N(1)-(5-phospho-D-ribosyl)glycinamide: step 1/2. In terms of biological role, part of the phosphoribosylformylglycinamidine synthase complex involved in the purines biosynthetic pathway. Catalyzes the ATP-dependent conversion of formylglycinamide ribonucleotide (FGAR) and glutamine to yield formylglycinamidine ribonucleotide (FGAM) and glutamate. The FGAM synthase complex is composed of three subunits. PurQ produces an ammonia molecule by converting glutamine to glutamate. PurL transfers the ammonia molecule to FGAR to form FGAM in an ATP-dependent manner. PurS interacts with PurQ and PurL and is thought to assist in the transfer of the ammonia molecule from PurQ to PurL. The protein is Phosphoribosylformylglycinamidine synthase subunit PurQ of Streptomyces avermitilis (strain ATCC 31267 / DSM 46492 / JCM 5070 / NBRC 14893 / NCIMB 12804 / NRRL 8165 / MA-4680).